The chain runs to 198 residues: MQVTIECQKRPEGSKPNTLRRQGLIPAALYGHKGTESISLIIKEKDAQLLLKKASVNNTLVDVNIPDVPWSGKALIREVQTHPWKRFVYHLSFFSVAAHGKIDVVVPLNLVGESSGVKQGGIIEQVITEISVQCLPESIPETIEIDISPLKIGDSISVGDLQLSEGVTYLDDPTQTILTVMAPKKGSATEEETAEASA.

It belongs to the bacterial ribosomal protein bL25 family. CTC subfamily. In terms of assembly, part of the 50S ribosomal subunit; part of the 5S rRNA/L5/L18/L25 subcomplex. Contacts the 5S rRNA. Binds to the 5S rRNA independently of L5 and L18.

Functionally, this is one of the proteins that binds to the 5S RNA in the ribosome where it forms part of the central protuberance. The polypeptide is Large ribosomal subunit protein bL25 (Gloeothece citriformis (strain PCC 7424) (Cyanothece sp. (strain PCC 7424))).